The chain runs to 389 residues: 5-amino-6-(D-ribitylamino)uracil--L-tyrosine 4-hydroxyphenyl transferase (389 aa).

One can recognise a Radical SAM core domain in the interval 56–298; that stretch reads VSYVINRNIN…QAVARLFFGR (243 aa). [4Fe-4S] cluster is bound by residues Cys-70, Cys-74, and Cys-77.

The protein belongs to the radical SAM superfamily. CofH family. In terms of assembly, consists of two subunits, CofG and CofH. It depends on [4Fe-4S] cluster as a cofactor.

The catalysed reaction is 5-amino-6-(D-ribitylamino)uracil + L-tyrosine + S-adenosyl-L-methionine = 5-amino-5-(4-hydroxybenzyl)-6-(D-ribitylimino)-5,6-dihydrouracil + 2-iminoacetate + 5'-deoxyadenosine + L-methionine + H(+). It participates in cofactor biosynthesis; coenzyme F0 biosynthesis. In terms of biological role, catalyzes the radical-mediated synthesis of 5-amino-5-(4-hydroxybenzyl)-6-(D-ribitylimino)-5,6-dihydrouracil from 5-amino-6-(D-ribitylamino)uracil and L-tyrosine. The protein is 5-amino-6-(D-ribitylamino)uracil--L-tyrosine 4-hydroxyphenyl transferase of Gloeobacter violaceus (strain ATCC 29082 / PCC 7421).